Consider the following 514-residue polypeptide: Zinc finger CCCH-type with G patch domain-containing protein (514 aa).

Positions 96-129 (GEEPQPPGAGDGASTGSKDSEEEEEEEDGSSGMK) are disordered. The segment covering 115 to 124 (SEEEEEEEDG) has biased composition (acidic residues). A C3H1-type zinc finger spans residues 171 to 197 (KAMKPCPFFLDGKCRFDDSCRFSHGQV). Disordered stretches follow at residues 262 to 288 (IPPLRGSDSSSSDDDDDDEEEDDAAED), 363 to 422 (QQRK…AAER), and 494 to 514 (EEHSLQREQRKADTHKKMTEF). A compositionally biased stretch (acidic residues) spans 272 to 287 (SSDDDDDDEEEDDAAE). Residues 315 to 373 (TRGIGSKLLARMGYEIGKGLGRNAEGRVEPIQAVLLPKGKSLDQCIEMQQRKKAGGKRE) enclose the G-patch domain. Basic residues predominate over residues 365–383 (RKKAGGKREHKAGKRRPRA).

Its subcellular location is the nucleus. Functionally, transcription repressor that specifically binds the 5'-GGAG[GA]A[GA]A-3' consensus sequence. Represses transcription by recruiting the chromatin multiprotein complex NuRD to target promoters. Negatively regulates expression of EGFR, a gene involved in cell proliferation, survival and migration. This chain is Zinc finger CCCH-type with G patch domain-containing protein (zgpat), found in Xenopus tropicalis (Western clawed frog).